Consider the following 302-residue polypeptide: NAD kinase 2 (302 aa).

The active-site Proton acceptor is the aspartate 78. NAD(+)-binding positions include 78–79, 152–153, aspartate 182, 193–198, and alanine 217; these read DG, NE, and TAYALS.

Belongs to the NAD kinase family. It depends on a divalent metal cation as a cofactor.

It localises to the cytoplasm. The catalysed reaction is NAD(+) + ATP = ADP + NADP(+) + H(+). Functionally, involved in the regulation of the intracellular balance of NAD and NADP, and is a key enzyme in the biosynthesis of NADP. Catalyzes specifically the phosphorylation on 2'-hydroxyl of the adenosine moiety of NAD to yield NADP. The protein is NAD kinase 2 of Prochlorococcus marinus (strain MIT 9313).